We begin with the raw amino-acid sequence, 503 residues long: 3-octaprenyl-4-hydroxybenzoate carboxy-lyase (503 aa).

A Mn(2+)-binding site is contributed by N176. Prenylated FMN-binding positions include 179–181, 193–195, and 198–199; these read IYR, RWL, and RG. Residue E242 coordinates Mn(2+). D303 serves as the catalytic Proton donor.

This sequence belongs to the UbiD family. As to quaternary structure, homohexamer. Prenylated FMN serves as cofactor. Mn(2+) is required as a cofactor.

The protein resides in the cell membrane. The enzyme catalyses a 4-hydroxy-3-(all-trans-polyprenyl)benzoate + H(+) = a 2-(all-trans-polyprenyl)phenol + CO2. It participates in cofactor biosynthesis; ubiquinone biosynthesis. Functionally, catalyzes the decarboxylation of 3-octaprenyl-4-hydroxy benzoate to 2-octaprenylphenol, an intermediate step in ubiquinone biosynthesis. This Ralstonia pickettii (strain 12J) protein is 3-octaprenyl-4-hydroxybenzoate carboxy-lyase.